Reading from the N-terminus, the 198-residue chain is Peroxiredoxin-2 (198 aa).

N-acetylalanine is present on Ala-2. In terms of domain architecture, Thioredoxin spans 6–164 (AHIGKPAPDF…ALRLVQAFQY (159 aa)). Cys-51 serves as the catalytic Cysteine sulfenic acid (-SOH) intermediate. Ser-112 is modified (phosphoserine). Thr-182 bears the Phosphothreonine mark. Lys-196 bears the N6-acetyllysine mark.

The protein belongs to the peroxiredoxin family. AhpC/Prx1 subfamily. As to quaternary structure, homodimer; disulfide-linked, upon oxidation. 5 homodimers assemble to form a ring-like decamer. Interacts with TIPIN. Post-translationally, the enzyme can be inactivated by further oxidation of the cysteine sulfenic acid (C(P)-SOH) to sulphinic acid (C(P)-SO2H) instead of its condensation to a disulfide bond. It can be reactivated by forming a transient disulfide bond with sulfiredoxin SRXN1, which reduces the cysteine sulfinic acid in an ATP- and Mg-dependent manner. Acetylation increases resistance to transition to high molecular-mass complexes. Deacetylated by HDAC6 which decreases reducing activity.

Its subcellular location is the cytoplasm. The enzyme catalyses a hydroperoxide + [thioredoxin]-dithiol = an alcohol + [thioredoxin]-disulfide + H2O. Its function is as follows. Thiol-specific peroxidase that catalyzes the reduction of hydrogen peroxide and organic hydroperoxides to water and alcohols, respectively. Plays a role in cell protection against oxidative stress by detoxifying peroxides and as sensor of hydrogen peroxide-mediated signaling events. Might participate in the signaling cascades of growth factors and tumor necrosis factor-alpha by regulating the intracellular concentrations of H(2)O(2). The chain is Peroxiredoxin-2 (Prdx2) from Rattus norvegicus (Rat).